Here is a 381-residue protein sequence, read N- to C-terminus: NF-kappa-B inhibitor-like protein 1 (381 aa).

The interval 1–34 (MSNPSPQVPEEEASTSVCRPKSSMASTSRRQRRE) is disordered. ANK repeat units lie at residues 64–93 (GQPPPLHRACARHDAPALCLLLRLGADPAH) and 97–133 (HGDTALHAAARQGPDAYTDFFLPLLSRCPSAMGIKNK). Disordered regions lie at residues 131 to 167 (KNKDGETPGQILGWGPPWDSAEEEEEDDASKEREWRQ), 186 to 242 (GDAS…QEEE), and 256 to 294 (ELRESRARRAQEALGDREPKPARAGPRAEHPRGAGRGSL). S150 carries the phosphoserine modification. Residues 150–159 (SAEEEEEDDA) show a composition bias toward acidic residues. The segment covering 256–287 (ELRESRARRAQEALGDREPKPARAGPRAEHPR) has biased composition (basic and acidic residues).

As to quaternary structure, interacts with CACTIN (via N-terminal domain); the interaction occurs in a pro-inflammatory-independent manner.

Its subcellular location is the nucleus. Functionally, involved in the regulation of innate immune response. Acts as negative regulator of Toll-like receptor and interferon-regulatory factor (IRF) signaling pathways. Contributes to the negative regulation of transcriptional activation of NF-kappa-B target genes in response to endogenous pro-inflammatory stimuli. The sequence is that of NF-kappa-B inhibitor-like protein 1 (NFKBIL1) from Macaca mulatta (Rhesus macaque).